The primary structure comprises 1006 residues: DNA polymerase (1006 aa).

This sequence belongs to the DNA polymerase type-B family. In terms of assembly, interacts with OPG148. Component of the Uracil-DNA glycosylase(UDG)-OPG148-polymerase complex; OPG148 and OPG116/UDG form a heterodimeric processivity factor that associates with OPG071 to form the processive polymerase holoenzyme.

It carries out the reaction DNA(n) + a 2'-deoxyribonucleoside 5'-triphosphate = DNA(n+1) + diphosphate. Catalyzes DNA synthesis. Acquires processivity by associating with a heterodimeric processivity factor comprised of the viral OPG148 and OPG116 proteins, thereby forming the DNA polymerase holoenzyme. Displays 3'- to 5' exonuclease activity. Might participate in viral DNA recombination. Does not perform OPG116/D4synthesis across an abasic site. This chain is DNA polymerase (OPG071), found in Monkeypox virus.